Here is a 149-residue protein sequence, read N- to C-terminus: Transcriptional repressor NrdR (149 aa).

Residues Cys-3–Cys-34 fold into a zinc finger. The 91-residue stretch at Pro-49–Glu-139 folds into the ATP-cone domain.

This sequence belongs to the NrdR family. Zn(2+) is required as a cofactor.

In terms of biological role, negatively regulates transcription of bacterial ribonucleotide reductase nrd genes and operons by binding to NrdR-boxes. The protein is Transcriptional repressor NrdR of Enterobacter sp. (strain 638).